The primary structure comprises 436 residues: Enolase (436 aa).

Q167 lines the (2R)-2-phosphoglycerate pocket. E209 acts as the Proton donor in catalysis. Mg(2+) is bound by residues D246, E291, and D318. (2R)-2-phosphoglycerate contacts are provided by K343, R372, S373, and K394. K343 functions as the Proton acceptor in the catalytic mechanism.

It belongs to the enolase family. In terms of assembly, component of the RNA degradosome, a multiprotein complex involved in RNA processing and mRNA degradation. It depends on Mg(2+) as a cofactor.

It is found in the cytoplasm. The protein resides in the secreted. The protein localises to the cell surface. It carries out the reaction (2R)-2-phosphoglycerate = phosphoenolpyruvate + H2O. It participates in carbohydrate degradation; glycolysis; pyruvate from D-glyceraldehyde 3-phosphate: step 4/5. In terms of biological role, catalyzes the reversible conversion of 2-phosphoglycerate (2-PG) into phosphoenolpyruvate (PEP). It is essential for the degradation of carbohydrates via glycolysis. The chain is Enolase from Haemophilus influenzae (strain PittGG).